The following is a 431-amino-acid chain: Phosphoribosylamine--glycine ligase (431 aa).

One can recognise an ATP-grasp domain in the interval 108–315 (KDFLARHEIP…LVLLVEAAFA (208 aa)). 134–195 (LQEKGAPIVI…EEFLDGEEAS (62 aa)) serves as a coordination point for ATP. Mg(2+) contacts are provided by Glu285 and Asn287.

The protein belongs to the GARS family. Mg(2+) is required as a cofactor. Mn(2+) serves as cofactor.

The enzyme catalyses 5-phospho-beta-D-ribosylamine + glycine + ATP = N(1)-(5-phospho-beta-D-ribosyl)glycinamide + ADP + phosphate + H(+). The protein operates within purine metabolism; IMP biosynthesis via de novo pathway; N(1)-(5-phospho-D-ribosyl)glycinamide from 5-phospho-alpha-D-ribose 1-diphosphate: step 2/2. The sequence is that of Phosphoribosylamine--glycine ligase from Pseudomonas putida (strain ATCC 47054 / DSM 6125 / CFBP 8728 / NCIMB 11950 / KT2440).